A 124-amino-acid chain; its full sequence is Small ribosomal subunit protein uS13 (124 aa).

Over residues 92–117 (RRGLPVRGQRTKSNARTRKGPRKTVA) the composition is skewed to basic residues. The tract at residues 92–124 (RRGLPVRGQRTKSNARTRKGPRKTVANKKIESK) is disordered.

Belongs to the universal ribosomal protein uS13 family. As to quaternary structure, part of the 30S ribosomal subunit. Forms a loose heterodimer with protein S19. Forms two bridges to the 50S subunit in the 70S ribosome.

Its function is as follows. Located at the top of the head of the 30S subunit, it contacts several helices of the 16S rRNA. In the 70S ribosome it contacts the 23S rRNA (bridge B1a) and protein L5 of the 50S subunit (bridge B1b), connecting the 2 subunits; these bridges are implicated in subunit movement. Contacts the tRNAs in the A and P-sites. The chain is Small ribosomal subunit protein uS13 from Mycoplasmoides gallisepticum (strain R(low / passage 15 / clone 2)) (Mycoplasma gallisepticum).